A 211-amino-acid polypeptide reads, in one-letter code: ATP phosphoribosyltransferase (211 aa).

Belongs to the ATP phosphoribosyltransferase family. Short subfamily. As to quaternary structure, heteromultimer composed of HisG and HisZ subunits.

Its subcellular location is the cytoplasm. It catalyses the reaction 1-(5-phospho-beta-D-ribosyl)-ATP + diphosphate = 5-phospho-alpha-D-ribose 1-diphosphate + ATP. It functions in the pathway amino-acid biosynthesis; L-histidine biosynthesis; L-histidine from 5-phospho-alpha-D-ribose 1-diphosphate: step 1/9. Catalyzes the condensation of ATP and 5-phosphoribose 1-diphosphate to form N'-(5'-phosphoribosyl)-ATP (PR-ATP). Has a crucial role in the pathway because the rate of histidine biosynthesis seems to be controlled primarily by regulation of HisG enzymatic activity. The protein is ATP phosphoribosyltransferase of Ectopseudomonas mendocina (strain ymp) (Pseudomonas mendocina).